An 889-amino-acid polypeptide reads, in one-letter code: MSGVNEIRSTFLNYFAKNGHEIVSSSPLVPRNDPTLMFTNAGMVQFKNVFTGLEKRSYQRATTSQKCVRAGGKHNDLDNVGYTARHLTFFEMLGNFSFGDYFKERAIELAWNLITRDFGLKKDKLLVTVYHTDDEAAGYWKKIAGFSDDRIIRIPTSDNFWAMGDTGPCGPCSEIFIDRGEHIFGGPPGSPDEDGDRFLEFWNLVFMQYDQVTKDERVPLPRPSIDTGMGLERMASILQGVDSVFDTDLFRSLIDATSSALGRGPTEQDAASFRVIADHLRSSSFLIADGVLPSNEGRGYVLRRIMRRAMRHAQLLGASEPLMWRLVWALVREMGQAYPELVRAEAMIEETMRLEETRFRKTLDRGLAILDEKSAGLKKGDMFDGETAFTLYDTYGFPLDLTQDALRNRGINVDIASFTDAMDRQRAKARASWAGSGEAATEAVWFSLREKLGATEFLGYDTETAEGVVTALVKDGAEVDALKAGESGAIIVNQTPFYAESGGQVGDTGVLTADGVRFVVTDTMKKAGDLFVHFGTVEQGSIKLGDALALDVDHARRSAIRANHSATHLLHEALRQVLGDHIAQKGSLVAPDRLRFDFVHQKPITQDELRKVEDIANDIVLENDEVVTRLMAVDDAREAGARALFGEKYGDEVRVVSMGKAARDHGSNVFGWSVELCGGTHVKRTGDIGLVSITGESAVAAGVRRIEALTGRAARHNANAAISTAKLAASELRTTLDDMPARITALMDERKKLERELSEARKKLAMGGSAAGDGAASDVRDIGGIKLMARAVEGIEIKDLKGLVDQGKKQLGSGVIALVATSEDGKGSIVVGVTPDLVSRFSAVDLVRKASEVLGGKGGGGKPDMAQAGGPDGSKAGAALEAIAAAIGG.

Zn(2+)-binding residues include histidine 564, histidine 568, cysteine 677, and histidine 681.

It belongs to the class-II aminoacyl-tRNA synthetase family. It depends on Zn(2+) as a cofactor.

It localises to the cytoplasm. The catalysed reaction is tRNA(Ala) + L-alanine + ATP = L-alanyl-tRNA(Ala) + AMP + diphosphate. Catalyzes the attachment of alanine to tRNA(Ala) in a two-step reaction: alanine is first activated by ATP to form Ala-AMP and then transferred to the acceptor end of tRNA(Ala). Also edits incorrectly charged Ser-tRNA(Ala) and Gly-tRNA(Ala) via its editing domain. The chain is Alanine--tRNA ligase from Rhodopseudomonas palustris (strain ATCC BAA-98 / CGA009).